The primary structure comprises 378 residues: tRNA (guanine(26)-N(2))-dimethyltransferase (378 aa).

Residues Lys-4–Ile-374 enclose the Trm1 methyltransferase domain. Arg-44, Arg-69, Asp-87, Asp-114, and Ala-115 together coordinate S-adenosyl-L-methionine. Positions 246, 249, 263, and 266 each coordinate Zn(2+).

Belongs to the class I-like SAM-binding methyltransferase superfamily. Trm1 family.

The catalysed reaction is guanosine(26) in tRNA + 2 S-adenosyl-L-methionine = N(2)-dimethylguanosine(26) in tRNA + 2 S-adenosyl-L-homocysteine + 2 H(+). Dimethylates a single guanine residue at position 26 of a number of tRNAs using S-adenosyl-L-methionine as donor of the methyl groups. This is tRNA (guanine(26)-N(2))-dimethyltransferase from Saccharolobus solfataricus (strain ATCC 35092 / DSM 1617 / JCM 11322 / P2) (Sulfolobus solfataricus).